Here is a 1940-residue protein sequence, read N- to C-terminus: MEGGTDAAAFAAFPSIHAVPSTSGRMVTGSKLDELERIMKSSLHLEEDDFVPELPRSIHPRERPDWEETISAMARGADITVPGEIQIPAELPLRSCGSTASMKVKNVKKLSFTKGHFPKLAECAHFHYENVDFGSIQLTLTEDQNEVNRNGCESKELVFLVQIACQGRSWIVKRSYEDFRVLDKHLHLCIYDRRFSQLSELPRSDSVKDNPELVTQMLMAYLSRLSAIAGNKINCGPALTWMEIDNKGNHLLVHEESSINVPAIAAAHVIKRYNAQAPDELSFEVGDIVSVIDMPPKELTTWWRGKHGFQVGFFPSECVELINDKVPQSMTNSVPKPVSRKHGKLITFLRTFMKSRPSKQKLKQRGILRERVFGCDLGEHLLNSGQDVPQVLRSCTEFIEKHGVVDGIYRLSGIASNIQKLRHEFDSEQIPDLTKDVYIQDIHCVGSLCKLYFRELPNPLLTYQLYEKFSDAVSAASDEERLVKIHDVIQQLPPPHYRTLEFLMRHLSRLATYCSITNMHTKNLAIVWAPNLLRSKQIESACFSGTAAFMEVRIQSVVVEFILNHVEVLFSAKLSSVIREGAGHTSLSRPKSLLVSSPSTKLLSLEEAQARTQAQINSPVVGDSRYIEVGEGPAALQGRFHTVIDFPSERKRPPSKMKKSPVGSWRSFFNIGKSSSSSSMSKRKLQRNPSEPLEMKSMAFAGGRDSSAMRSAKSEESLSSLHAADGESKLFRPRRPRSSSDALSASYNGDLLDSCNRCNSYDNLPRDHDSDGDEGLIHVPAMLSGRSPEDEDLSPPDIGMATLDFDPMSFQCSPHQLDSEGPDNFFQLDIFASNGKDKLQSGTQNPGSVTGCEPLSPFQDKVISPFLSPDRSPSTDKVSKTASFAEKFVQALSPKMGRKAVRSPPLTISDPVSISLPSRVSEMIGSMPGNSAASQSIIWNRESSTNSRESETYYGCKLVDANLSSSSATADPWSTVTPVITCNQDGREDKAGIFTHGFPQPLESSDLEYIENYNLELGTTNVAAAYQNDDTELSRANQNKAHPPNSPQGASASESPQELSHVSSVSIIPPPPPPKNPARMLALALAESAQQASANKKPSFMQFMDLPPPPSVPEDKPLLEFSPKMSPEPLRSGPATPAASPPVISRKTSPATPPSTTSSFSVTTIHHSPVKNYNPLAGQMPTAVTPGLSPSSNQVFASVPDMLHSETIKMNSIIPSEAFTTGIPVTPPTEKTKESSRAPHLHQRSESFPSHPAYSTAKPTPPVRTMDSRLATAMHSNFNDSITANNYHSFLNTMMLPSSLEDALPRHNYSPHLKTGNIDEEGVNYRQTYLSHNKQDDPADLGDLYRQPYISPGKSENAEIGNAYRHPYPSNTESESLKEPLEPFLHHKPAVAPKTYRAETLLPHIPPQVYGSRCDTPSSAFYGTYINQAKHPRSRNKPDYMPSMSPGVRSYTEDTSSYPTIRRVQSLHVPMQTLPPPIRTVPISRTEVPPDDDPAYCPRPLYQYKQCPPFNSQSDYHVTQLQPYFENGRVHYRYSPYSGGPTYFSSDSNFYDMDPYGTLRLRQLPLYPSRDFASYTTRLQPKATYRSQGLPPYPRGTLREHNFISRDVPPALPPEHPRPLHISWDMEDMDRYRLQSLRRENKARQRAKGPVMSQYDNVTPSLVEDVAGLDVIHLRSRSDPGKTPGLLSVAETKDVRYPGRTEGDERTTYPPPVFGNGHQDKPSLPQKQSGSSRSRMQHDISTEQHSQDTLHRQPSEGRNGPPIPPVDYNAKGMPNPPDPTSYHSSANKYNLTQQEPMRLNHKELRLTEDIERSHTRPADNQHRDCYREEQAQFASVVPPPKPERSHSLRAHNPAVLERDPSIFYPYQTLHAKRQSTINTVSQYDNLSDYHSIPHHRTTNQSTPNAFPLPHGRTYSTALGQGAFLAAELALQRPETKIHVE.

The region spanning 154-248 is the PX; atypical domain; sequence SKELVFLVQI…LTWMEIDNKG (95 aa). In terms of domain architecture, SH3 spans 262-324; it reads PAIAAAHVIK…PSECVELIND (63 aa). The region spanning 375-570 is the Rho-GAP domain; the sequence is CDLGEHLLNS…FILNHVEVLF (196 aa). 5 disordered regions span residues 646–746, 1035–1163, 1219–1264, 1430–1454, and 1675–1786; these read FPSE…LSAS, RANQ…FSVT, FTTG…PPVR, KHPRSRNKPDYMPSMSPGVRSYTED, and RSRS…HSSA. Residues 1047 to 1061 are compositionally biased toward polar residues; it reads PQGASASESPQELSH. 2 stretches are compositionally biased toward low complexity: residues 1081–1094 and 1145–1163; these read LALALAESAQQASA and SRKTSPATPPSTTSSFSVT. Basic and acidic residues predominate over residues 1691-1707; the sequence is ETKDVRYPGRTEGDERT. The segment covering 1725-1734 has biased composition (polar residues); the sequence is PQKQSGSSRS. A compositionally biased stretch (basic and acidic residues) spans 1736–1755; the sequence is MQHDISTEQHSQDTLHRQPS.

Belongs to the PX domain-containing GAP family.

The protein localises to the cytoplasm. Its subcellular location is the membrane. It is found in the cell membrane. Functionally, GTPase-activating protein (GAP) promoting GTP hydrolysis on RHOA, CDC42 and RAC1 small GTPases. The protein is Rho GTPase-activating protein 32 (arhgap32) of Xenopus laevis (African clawed frog).